The primary structure comprises 298 residues: 5,10-methylenetetrahydrofolate reductase (298 aa).

E28 (proton donor/acceptor) is an active-site residue. T59 contacts NADH. 13 residues coordinate FAD: Y60, A62, H88, R118, G119, D120, A132, Y152, H156, A159, D165, N168, and K172. D120 lines the (6S)-5-methyl-5,6,7,8-tetrahydrofolate pocket. Position 183 (Q183) interacts with NADH. Q183, Q219, and R279 together coordinate (6S)-5-methyl-5,6,7,8-tetrahydrofolate.

Belongs to the methylenetetrahydrofolate reductase family. The cofactor is FAD.

The enzyme catalyses (6S)-5-methyl-5,6,7,8-tetrahydrofolate + NAD(+) = (6R)-5,10-methylene-5,6,7,8-tetrahydrofolate + NADH + H(+). Its pathway is one-carbon metabolism; tetrahydrofolate interconversion. The protein operates within amino-acid biosynthesis; L-methionine biosynthesis via de novo pathway. Catalyzes the NADH-dependent reduction of 5,10-methylenetetrahydrofolate to 5-methyltetrahydrofolate. Is required to provide the methyl group necessary for methionine synthetase to convert homocysteine to methionine; the methyl group is given by 5-methyltetrahydrofolate. This chain is 5,10-methylenetetrahydrofolate reductase (metF), found in Pectobacterium carotovorum subsp. carotovorum (Erwinia carotovora subsp. carotovora).